Here is a 426-residue protein sequence, read N- to C-terminus: Trigger factor 1 (426 aa).

The PPIase FKBP-type domain maps to 163–248 (QDTVNIDFAG…VNKLKRKEYA (86 aa)).

This sequence belongs to the FKBP-type PPIase family. Tig subfamily.

It is found in the cytoplasm. The catalysed reaction is [protein]-peptidylproline (omega=180) = [protein]-peptidylproline (omega=0). In terms of biological role, involved in protein export. Acts as a chaperone by maintaining the newly synthesized protein in an open conformation. Functions as a peptidyl-prolyl cis-trans isomerase. This chain is Trigger factor 1, found in Desulfitobacterium hafniense (strain Y51).